The following is a 904-amino-acid chain: Protein translocase subunit SecA (904 aa).

ATP is bound by residues Gln89, 107-111, and Asp496; that span reads GEGKT. The interval 870 to 904 is disordered; it reads GGFQELSSGTPSPTVTVTTSSGGGTERKTSRRRKR. Residues 876–889 show a composition bias toward low complexity; it reads SSGTPSPTVTVTTS.

Belongs to the SecA family. As to quaternary structure, monomer and homodimer. Part of the essential Sec protein translocation apparatus which comprises SecA, SecYEG and auxiliary proteins SecDF. Other proteins may also be involved.

It is found in the cell inner membrane. It localises to the cytoplasm. It catalyses the reaction ATP + H2O + cellular proteinSide 1 = ADP + phosphate + cellular proteinSide 2.. In terms of biological role, part of the Sec protein translocase complex. Interacts with the SecYEG preprotein conducting channel. Has a central role in coupling the hydrolysis of ATP to the transfer of proteins into and across the cell membrane, serving as an ATP-driven molecular motor driving the stepwise translocation of polypeptide chains across the membrane. In Leptospira borgpetersenii serovar Hardjo-bovis (strain L550), this protein is Protein translocase subunit SecA.